A 267-amino-acid chain; its full sequence is Ras-related protein Rab-36 (267 aa).

Residues Val68, Gly69, Lys70, Thr71, Ser72, Asp83, Tyr86, and Thr89 each coordinate GTP. Residue Thr71 participates in Mg(2+) binding. The Switch 1 signature appears at 76–94; it reads RLCKNVFDHDYKATIGVDF. The Mg(2+) site is built by Thr89 and Asp112. The short motif at 113–132 is the Switch 2 element; sequence TAGQEKFKCIASAYYRGAQV. Residues Gly115, Lys172, Asp174, Ser203, Ala204, and Lys205 each contribute to the GTP site. 2 S-geranylgeranyl cysteine lipidation sites follow: Cys266 and Cys267.

It belongs to the small GTPase superfamily. Rab family. Mg(2+) is required as a cofactor.

The protein localises to the golgi apparatus membrane. The enzyme catalyses GTP + H2O = GDP + phosphate + H(+). Its activity is regulated as follows. Regulated by guanine nucleotide exchange factors (GEFs) which promote the exchange of bound GDP for free GTP. Regulated by GTPase activating proteins (GAPs) which increase the GTP hydrolysis activity. Inhibited by GDP dissociation inhibitors (GDIs). In terms of biological role, the small GTPases Rab are key regulators of intracellular membrane trafficking, from the formation of transport vesicles to their fusion with membranes. Rabs cycle between an inactive GDP-bound form and an active GTP-bound form that is able to recruit to membranes different sets of downstream effectors directly responsible for vesicle formation, movement, tethering and fusion. This chain is Ras-related protein Rab-36, found in Mus musculus (Mouse).